A 102-amino-acid polypeptide reads, in one-letter code: Small ribosomal subunit protein uS10 (102 aa).

The protein belongs to the universal ribosomal protein uS10 family. As to quaternary structure, part of the 30S ribosomal subunit.

Its function is as follows. Involved in the binding of tRNA to the ribosomes. The polypeptide is Small ribosomal subunit protein uS10 (Acidiphilium cryptum (strain JF-5)).